A 125-amino-acid chain; its full sequence is Small ribosomal subunit protein uS12c (125 aa).

The segment at 1 to 23 (MPTLEHLTRSPRKKIKRKTKSPA) is disordered. Residues 9 to 20 (RSPRKKIKRKTK) are compositionally biased toward basic residues.

It belongs to the universal ribosomal protein uS12 family. As to quaternary structure, part of the 30S ribosomal subunit.

Its subcellular location is the plastid. It localises to the chloroplast. Functionally, with S4 and S5 plays an important role in translational accuracy. Located at the interface of the 30S and 50S subunits. This chain is Small ribosomal subunit protein uS12c (rps12), found in Euglena gracilis.